Reading from the N-terminus, the 585-residue chain is Arginine--tRNA ligase (585 aa).

Residues 131–141 carry the 'HIGH' region motif; sequence ANPTGPMHVGH.

Belongs to the class-I aminoacyl-tRNA synthetase family. Monomer.

It localises to the cytoplasm. The enzyme catalyses tRNA(Arg) + L-arginine + ATP = L-arginyl-tRNA(Arg) + AMP + diphosphate. This Bartonella henselae (strain ATCC 49882 / DSM 28221 / CCUG 30454 / Houston 1) (Rochalimaea henselae) protein is Arginine--tRNA ligase.